A 446-amino-acid polypeptide reads, in one-letter code: UDP-N-acetylmuramoylalanine--D-glutamate ligase (446 aa).

118 to 124 (GSNGKST) serves as a coordination point for ATP.

The protein belongs to the MurCDEF family.

The protein resides in the cytoplasm. The enzyme catalyses UDP-N-acetyl-alpha-D-muramoyl-L-alanine + D-glutamate + ATP = UDP-N-acetyl-alpha-D-muramoyl-L-alanyl-D-glutamate + ADP + phosphate + H(+). It participates in cell wall biogenesis; peptidoglycan biosynthesis. Functionally, cell wall formation. Catalyzes the addition of glutamate to the nucleotide precursor UDP-N-acetylmuramoyl-L-alanine (UMA). This Pseudoalteromonas translucida (strain TAC 125) protein is UDP-N-acetylmuramoylalanine--D-glutamate ligase.